A 496-amino-acid chain; its full sequence is GTPase Der (496 aa).

EngA-type G domains follow at residues 3–166 (PVVA…FDNL) and 208–381 (IKLA…RSAT). GTP-binding positions include 9–16 (GRPNVGKS), 56–60 (DTGGI), 118–121 (NKVD), 214–221 (GRPNVGKS), 261–265 (DTAGV), and 326–329 (NKWD). In terms of domain architecture, KH-like spans 382–466 (TRVGTSVLTR…PIRIQFQNSD (85 aa)).

It belongs to the TRAFAC class TrmE-Era-EngA-EngB-Septin-like GTPase superfamily. EngA (Der) GTPase family. As to quaternary structure, associates with the 50S ribosomal subunit.

In terms of biological role, GTPase that plays an essential role in the late steps of ribosome biogenesis. In Vibrio vulnificus (strain YJ016), this protein is GTPase Der.